A 256-amino-acid chain; its full sequence is ATP synthase peripheral stalk subunit b, mitochondrial (256 aa).

A mitochondrion-targeting transit peptide spans 1 to 42 (MLSRVVLSAAATAAPCLKNAAVLGPGVLQATRVFHTGQPRLA). The residue at position 131 (Lys-131) is an N6-succinyllysine. 6 positions are modified to N6-acetyllysine: Lys-139, Lys-154, Lys-162, Lys-221, Lys-233, and Lys-244.

This sequence belongs to the eukaryotic ATPase B chain family. Component of the ATP synthase complex composed at least of ATP5F1A/subunit alpha, ATP5F1B/subunit beta, ATP5MC1/subunit c (homooctomer), MT-ATP6/subunit a, MT-ATP8/subunit 8, ATP5ME/subunit e, ATP5MF/subunit f, ATP5MG/subunit g, ATP5MK/subunit k, ATP5MJ/subunit j, ATP5F1C/subunit gamma, ATP5F1D/subunit delta, ATP5F1E/subunit epsilon, ATP5PF/subunit F6, ATP5PB/subunit b, ATP5PD/subunit d, ATP5PO/subunit OSCP. ATP synthase complex consists of a soluble F(1) head domain (subunits alpha(3) and beta(3)) - the catalytic core - and a membrane F(0) domain - the membrane proton channel (subunits c, a, 8, e, f, g, k and j). These two domains are linked by a central stalk (subunits gamma, delta, and epsilon) rotating inside the F1 region and a stationary peripheral stalk (subunits F6, b, d, and OSCP).

It localises to the mitochondrion. The protein resides in the mitochondrion inner membrane. Functionally, subunit b, of the mitochondrial membrane ATP synthase complex (F(1)F(0) ATP synthase or Complex V) that produces ATP from ADP in the presence of a proton gradient across the membrane which is generated by electron transport complexes of the respiratory chain. ATP synthase complex consist of a soluble F(1) head domain - the catalytic core - and a membrane F(1) domain - the membrane proton channel. These two domains are linked by a central stalk rotating inside the F(1) region and a stationary peripheral stalk. During catalysis, ATP synthesis in the catalytic domain of F(1) is coupled via a rotary mechanism of the central stalk subunits to proton translocation. In vivo, can only synthesize ATP although its ATP hydrolase activity can be activated artificially in vitro. Part of the complex F(0) domain. Part of the complex F(0) domain and the peripheric stalk, which acts as a stator to hold the catalytic alpha(3)beta(3) subcomplex and subunit a/ATP6 static relative to the rotary elements. This chain is ATP synthase peripheral stalk subunit b, mitochondrial, found in Rattus norvegicus (Rat).